Reading from the N-terminus, the 214-residue chain is Putative 3-methyladenine DNA glycosylase (214 aa).

The protein belongs to the DNA glycosylase MPG family.

The protein is Putative 3-methyladenine DNA glycosylase of Mycobacterium leprae (strain Br4923).